The chain runs to 220 residues: 26S proteasome non-ATPase regulatory subunit 9 (220 aa).

2 coiled-coil regions span residues 4–32 and 61–91; these read GTTT…GQIL and RLAR…YHSE. The PDZ domain occupies 102–200; the sequence is RASALDLDSD…QLDLILVPKT (99 aa).

The protein belongs to the proteasome subunit p27 family. Interacts with PI31; this interaction is increased by PI31 ADP-ribosylation. Interacts with Rpt5.

Acts as a chaperone during the assembly of the 26S proteasome, specifically of the base subcomplex of the PA700/19S regulatory complex (RC). This is 26S proteasome non-ATPase regulatory subunit 9 from Drosophila melanogaster (Fruit fly).